Consider the following 182-residue polypeptide: Probable RNA 2'-phosphotransferase (182 aa).

The protein belongs to the KptA/TPT1 family.

Its function is as follows. Removes the 2'-phosphate from RNA via an intermediate in which the phosphate is ADP-ribosylated by NAD followed by a presumed transesterification to release the RNA and generate ADP-ribose 1''-2''-cyclic phosphate (APPR&gt;P). May function as an ADP-ribosylase. This chain is Probable RNA 2'-phosphotransferase, found in Acetivibrio thermocellus (strain ATCC 27405 / DSM 1237 / JCM 9322 / NBRC 103400 / NCIMB 10682 / NRRL B-4536 / VPI 7372) (Clostridium thermocellum).